The sequence spans 331 residues: Phosphate acyltransferase (331 aa).

This sequence belongs to the PlsX family. Homodimer. Probably interacts with PlsY.

Its subcellular location is the cytoplasm. The catalysed reaction is a fatty acyl-[ACP] + phosphate = an acyl phosphate + holo-[ACP]. Its pathway is lipid metabolism; phospholipid metabolism. In terms of biological role, catalyzes the reversible formation of acyl-phosphate (acyl-PO(4)) from acyl-[acyl-carrier-protein] (acyl-ACP). This enzyme utilizes acyl-ACP as fatty acyl donor, but not acyl-CoA. The protein is Phosphate acyltransferase of Ureaplasma urealyticum serovar 10 (strain ATCC 33699 / Western).